The sequence spans 153 residues: Holo-[acyl-carrier-protein] synthase (153 aa).

Mg(2+) contacts are provided by Asp24 and Glu78.

The protein belongs to the P-Pant transferase superfamily. AcpS family. Mg(2+) is required as a cofactor.

Its subcellular location is the cytoplasm. It catalyses the reaction apo-[ACP] + CoA = holo-[ACP] + adenosine 3',5'-bisphosphate + H(+). Its function is as follows. Transfers the 4'-phosphopantetheine moiety from coenzyme A to a Ser of acyl-carrier-protein. In Bordetella parapertussis (strain 12822 / ATCC BAA-587 / NCTC 13253), this protein is Holo-[acyl-carrier-protein] synthase.